The sequence spans 120 residues: Large ribosomal subunit protein uL18 (120 aa).

The protein belongs to the universal ribosomal protein uL18 family. Part of the 50S ribosomal subunit; part of the 5S rRNA/L5/L18/L25 subcomplex. Contacts the 5S and 23S rRNAs.

Its function is as follows. This is one of the proteins that bind and probably mediate the attachment of the 5S RNA into the large ribosomal subunit, where it forms part of the central protuberance. The chain is Large ribosomal subunit protein uL18 from Janthinobacterium sp. (strain Marseille) (Minibacterium massiliensis).